The chain runs to 159 residues: Small ribosomal subunit protein uS7m (159 aa).

The protein belongs to the universal ribosomal protein uS7 family. Part of the small ribosomal subunit.

It is found in the mitochondrion. Its function is as follows. One of the primary rRNA binding proteins, it binds directly to the small rRNA where it nucleates assembly of the head domain of the small subunit. This is Small ribosomal subunit protein uS7m (RPS7) from Reclinomonas americana.